We begin with the raw amino-acid sequence, 556 residues long: Beta-hexosaminidase subunit beta (556 aa).

The N-terminal stretch at 1 to 42 (MELCGLGLPRPPMLLALLLATLLAAMLALLTQVALVVQVAEA) is a signal peptide. Positions 43–121 (ARAPSVSAKP…HHEPAEFQAK (79 aa)) are excised as a propeptide. Asn-84 carries an N-linked (GlcNAc...) asparagine glycan. Cysteines 91 and 137 form a disulfide. 3 N-linked (GlcNAc...) asparagine glycosylation sites follow: Asn-142, Asn-190, and Asn-327. 2 cysteine pairs are disulfide-bonded: Cys-309–Cys-360 and Cys-534–Cys-551. Glu-355 functions as the Proton donor in the catalytic mechanism.

This sequence belongs to the glycosyl hydrolase 20 family. There are 3 forms of beta-hexosaminidase: hexosaminidase A is a heterodimer composed of one subunit alpha and one subunit beta (chain A and B); hexosaminidase B is a homodimer of two beta subunits (two chains A and B); hexosaminidase S is a homodimer of two alpha subunits. The composition of the dimer (isozyme A versus isozyme S) has a significant effect on the substrate specificity of the alpha subunit active site. Post-translationally, N-linked glycans at Asn-142 and Asn-190 consist of Man(3)-GlcNAc(2) and Man(5 to 7)-GlcNAc(2), respectively. In terms of processing, the beta-A and beta-B chains are produced by proteolytic processing of the precursor beta chain.

Its subcellular location is the lysosome. It is found in the cytoplasmic vesicle. The protein localises to the secretory vesicle. It localises to the cortical granule. It carries out the reaction Hydrolysis of terminal non-reducing N-acetyl-D-hexosamine residues in N-acetyl-beta-D-hexosaminides.. The catalysed reaction is N-acetyl-beta-D-galactosaminyl-(1-&gt;4)-beta-D-3-sulfogalactosyl-(1-&gt;4)-beta-D-glucosyl-(1&lt;-&gt;1')-ceramide + H2O = a beta-D-3-sulfogalactosyl-(1-&gt;4)-beta-D-glucosyl-(1&lt;-&gt;1')-ceramide + N-acetyl-beta-D-galactosamine. It catalyses the reaction a ganglioside GM2 (d18:1(4E)) + H2O = a ganglioside GM3 (d18:1(4E)) + N-acetyl-beta-D-galactosamine. The enzyme catalyses a ganglioside GM2 + H2O = a ganglioside GM3 + N-acetyl-beta-D-galactosamine. It carries out the reaction beta-D-GalNAc-(1-&gt;4)-alpha-L-IdoA-(1-&gt;3)-beta-D-GalNAc-4-sulfate-(1-&gt;4)-alpha-L-IdoA-(1-&gt;3)-D-GalNAc-4-sulfate + H2O = alpha-L-IdoA-(1-&gt;3)-beta-D-GalNAc-4-sulfate-(1-&gt;4)-alpha-L-IdoA-(1-&gt;3)-D-GalNAc-4-sulfate + N-acetyl-D-galactosamine. The catalysed reaction is N-acetyl-beta-D-6-sulfogalactosaminyl-(1-&gt;4)-alpha-L-iduronyl-(1-&gt;3)-N-acetyl-D-6-sulfogalactosamine + H2O = alpha-L-iduronyl-(1-&gt;3)-N-acetyl-D-6-sulfogalactosamine + N-acetyl-D-6-sulfogalactosamine. Addition of GM2A stimulates the hydrolysis of sulfated glycosphingolipid SM2 and the ganglioside GM2. Hydrolyzes the non-reducing end N-acetyl-D-hexosamine and/or sulfated N-acetyl-D-hexosamine of glycoconjugates, such as the oligosaccharide moieties from proteins and neutral glycolipids, or from certain mucopolysaccharides. The isozyme B does not hydrolyze each of these substrates, however hydrolyzes efficiently neutral oligosaccharide. Only the isozyme A is responsible for the degradation of GM2 gangliosides in the presence of GM2A. During fertilization is responsible, at least in part, for the zona block to polyspermy. Present in the cortical granules of non-activated oocytes, is exocytosed during the cortical reaction in response to oocyte activation and inactivates the sperm galactosyltransferase-binding site, accounting for the block in sperm binding to the zona pellucida. The polypeptide is Beta-hexosaminidase subunit beta (Homo sapiens (Human)).